A 542-amino-acid polypeptide reads, in one-letter code: Calcium/calmodulin-dependent protein kinase type II subunit beta (542 aa).

In terms of domain architecture, Protein kinase spans 14 to 272; it reads YQLYEDIGKG…AHEALKHPWV (259 aa). Residue Y17 is modified to Phosphotyrosine. Residues 20–28 and K43 each bind ATP; that span reads IGKGAFSVV. The Proton acceptor role is filled by D136. The segment at 283–292 is autoinhibitory domain; it reads HRQETVECLK. T287 carries the post-translational modification Phosphothreonine; by autocatalysis. Positions 291 to 301 are calmodulin-binding; it reads LKKFNARRKLK. Phosphothreonine; by autocatalysis is present on residues T306 and T307. A disordered region spans residues 349–407; sequence ADGVKPQTNSTKNSAAATSPKGTLPPAALEPQTTVIHNPVDGIKESSDSTHTTIEDEDT. Residues 354–369 are compositionally biased toward polar residues; sequence PQTNSTKNSAAATSPK. Residues S367, S394, and S397 each carry the phosphoserine modification. Phosphothreonine occurs at positions 400 and 401.

The protein belongs to the protein kinase superfamily. CAMK Ser/Thr protein kinase family. CaMK subfamily. In terms of assembly, CAMK2 is composed of 4 different chains: alpha (CAMK2A), beta (CAMK2B), gamma (CAMK2G), and delta (CAMK2D). The different isoforms assemble into homo- or heteromultimeric holoenzymes composed of 12 subunits with two hexameric rings stacked one on top of the other. Interacts with SYNGAP1, CAMK2N2 and MPDZ. Interacts with FOXO3. Interacts (when in a kinase inactive state not associated with calmodulin) with ARC; leading to target ARC to inactive synapses. Interacts with CAMK2N1; this interaction requires CAMK2B activation by Ca(2+). In terms of processing, autophosphorylation of Thr-287 following activation by Ca(2+)/calmodulin. Phosphorylation of Thr-287 locks the kinase into an activated state.

The protein resides in the cytoplasm. The protein localises to the cytoskeleton. It is found in the microtubule organizing center. Its subcellular location is the centrosome. It localises to the sarcoplasmic reticulum membrane. The protein resides in the synapse. It catalyses the reaction L-seryl-[protein] + ATP = O-phospho-L-seryl-[protein] + ADP + H(+). The catalysed reaction is L-threonyl-[protein] + ATP = O-phospho-L-threonyl-[protein] + ADP + H(+). Activated by Ca(2+)/calmodulin. Binding of calmodulin results in conformational change that relieves intrasteric autoinhibition and allows autophosphorylation of Thr-287 which turns the kinase in a constitutively active form and confers to the kinase a Ca(2+)-independent activity. Calcium/calmodulin-dependent protein kinase that functions autonomously after Ca(2+)/calmodulin-binding and autophosphorylation, and is involved in dendritic spine and synapse formation, neuronal plasticity and regulation of sarcoplasmic reticulum Ca(2+) transport in skeletal muscle. In neurons, plays an essential structural role in the reorganization of the actin cytoskeleton during plasticity by binding and bundling actin filaments in a kinase-independent manner. This structural function is required for correct targeting of CaMK2A, which acts downstream of NMDAR to promote dendritic spine and synapse formation and maintain synaptic plasticity which enables long-term potentiation (LTP) and hippocampus-dependent learning. In developing hippocampal neurons, promotes arborization of the dendritic tree and in mature neurons, promotes dendritic remodeling. Also regulates the migration of developing neurons. Participates in the modulation of skeletal muscle function in response to exercise. In slow-twitch muscles, is involved in regulation of sarcoplasmic reticulum (SR) Ca(2+) transport and in fast-twitch muscle participates in the control of Ca(2+) release from the SR through phosphorylation of triadin, a ryanodine receptor-coupling factor, and phospholamban (PLN/PLB), an endogenous inhibitor of SERCA2A/ATP2A2. In response to interferon-gamma (IFN-gamma) stimulation, catalyzes phosphorylation of STAT1, stimulating the JAK-STAT signaling pathway. Phosphorylates reticulophagy regulator RETREG1 at 'Ser-147' under endoplasmic reticulum stress conditions which enhances RETREG1 oligomerization and its membrane scission and reticulophagy activity. This is Calcium/calmodulin-dependent protein kinase type II subunit beta (CAMK2B) from Bos taurus (Bovine).